The chain runs to 256 residues: Acetyl-coenzyme A carboxylase carboxyl transferase subunit alpha (256 aa).

A CoA carboxyltransferase C-terminal domain is found at Met1–Glu236.

It belongs to the AccA family. Acetyl-CoA carboxylase is a heterohexamer composed of biotin carboxyl carrier protein (AccB), biotin carboxylase (AccC) and two subunits each of ACCase subunit alpha (AccA) and ACCase subunit beta (AccD).

The protein resides in the cytoplasm. It carries out the reaction N(6)-carboxybiotinyl-L-lysyl-[protein] + acetyl-CoA = N(6)-biotinyl-L-lysyl-[protein] + malonyl-CoA. The protein operates within lipid metabolism; malonyl-CoA biosynthesis; malonyl-CoA from acetyl-CoA: step 1/1. Component of the acetyl coenzyme A carboxylase (ACC) complex. First, biotin carboxylase catalyzes the carboxylation of biotin on its carrier protein (BCCP) and then the CO(2) group is transferred by the carboxyltransferase to acetyl-CoA to form malonyl-CoA. This Streptococcus thermophilus (strain ATCC BAA-491 / LMD-9) protein is Acetyl-coenzyme A carboxylase carboxyl transferase subunit alpha.